A 224-amino-acid chain; its full sequence is uncharacterized protein (224 aa).

The next 5 membrane-spanning stretches (helical) occupy residues 32 to 52 (ILTL…PLVV), 60 to 80 (LFTN…IYFF), 100 to 120 (IIYL…SGLG), 130 to 150 (AIAY…LFGF), and 162 to 182 (LGFS…FGII).

The protein belongs to the derlin family.

It is found in the endoplasmic reticulum membrane. This is an uncharacterized protein from Schizosaccharomyces pombe (strain 972 / ATCC 24843) (Fission yeast).